The following is a 268-amino-acid chain: Interleukin-1 beta (268 aa).

Residues 1 to 115 constitute a propeptide that is removed on maturation; it reads MAAVPDTSDM…DNWDEGYVCD (115 aa).

This sequence belongs to the IL-1 family. In terms of assembly, monomer. In its precursor form, weakly interacts with full-length MEFV; the mature cytokine does not interact at all. Interacts with integrins ITGAV:ITGBV and ITGA5:ITGB1; integrin-binding is required for IL1B signaling. Interacts with cargo receptor TMED10; the interaction is direct and is required for the secretion of IL1B mature form. Interacts with HSP90AB1; the interaction facilitates cargo translocation into the ERGIC. Interacts with HSP90B1; the interaction facilitates cargo translocation into the ERGIC.

The protein resides in the cytoplasm. The protein localises to the cytosol. It localises to the secreted. It is found in the lysosome. Its subcellular location is the extracellular exosome. Potent pro-inflammatory cytokine. Initially discovered as the major endogenous pyrogen, induces prostaglandin synthesis, neutrophil influx and activation, T-cell activation and cytokine production, B-cell activation and antibody production, and fibroblast proliferation and collagen production. Promotes Th17 differentiation of T-cells. Synergizes with IL12/interleukin-12 to induce IFNG synthesis from T-helper 1 (Th1) cells. Plays a role in angiogenesis by inducing VEGF production synergistically with TNF and IL6. Involved in transduction of inflammation downstream of pyroptosis: its mature form is specifically released in the extracellular milieu by passing through the gasdermin-D (GSDMD) pore. In Equus caballus (Horse), this protein is Interleukin-1 beta (IL1B).